The primary structure comprises 442 residues: Coiled-coil domain-containing protein 91 (442 aa).

A GGA1-binding motif region spans residues 1–16 (MDDDDFGGFEAAETFD). The disordered stretch occupies residues 1-27 (MDDDDFGGFEAAETFDGEQGGNQAVSP). Phosphoserine occurs at positions 43 and 46. Disordered regions lie at residues 48–80 (ELIL…ADSS) and 114–134 (HGAL…SNSQ). Coiled coils occupy residues 130-210 (VSNS…GHEA), 253-318 (HAQH…MKDV), and 346-408 (ARDQ…RRLD). The tract at residues 211 to 414 (LSIIVDEYKA…RRLDQVTRQR (204 aa)) is homodimerization.

As to quaternary structure, homodimer. Interacts with GGA1, GGA2 and AP1G1.

It localises to the membrane. The protein resides in the golgi apparatus. Its subcellular location is the trans-Golgi network membrane. It is found in the trans-Golgi network. Its function is as follows. Involved in the regulation of membrane traffic through the trans-Golgi network (TGN). Functions in close cooperation with the GGAs in the sorting of hydrolases to lysosomes. The protein is Coiled-coil domain-containing protein 91 (Ccdc91) of Mus musculus (Mouse).